Reading from the N-terminus, the 332-residue chain is Methionine synthase (332 aa).

Residues H211, C213, and C296 each coordinate Zn(2+).

This sequence belongs to the archaeal MetE family. The cofactor is Zn(2+).

The protein operates within amino-acid biosynthesis; L-methionine biosynthesis via de novo pathway. In terms of biological role, catalyzes the transfer of a methyl group to L-homocysteine resulting in methionine formation. The physiological methyl donor is unknown. The polypeptide is Methionine synthase (Saccharolobus islandicus (strain L.S.2.15 / Lassen #1) (Sulfolobus islandicus)).